We begin with the raw amino-acid sequence, 606 residues long: Mitogen-activated protein kinase kinase kinase 7 (606 aa).

Residues 1 to 300 (MSTASAASSS…FPGADEPLQY (300 aa)) form an interaction with MAPK8IP1 region. Positions 36 to 291 (IEVEEVVGRG…KIMTHLMRYF (256 aa)) constitute a Protein kinase domain. ATP-binding positions include 42 to 50 (VGRGAFGVV) and Lys-63. Residue Lys-72 forms a Glycyl lysine isopeptide (Lys-Gly) (interchain with G-Cter in ubiquitin) linkage. The Proton acceptor role is filled by Asp-156. Residue Lys-158 forms a Glycyl lysine isopeptide (Lys-Gly) (interchain with G-Cter in ubiquitin) linkage. A (Microbial infection) O-acetylthreonine; by Yersinia YopJ; alternate mark is found at Thr-184 and Thr-187. Thr-184 and Thr-187 each carry phosphothreonine; by autocatalysis; alternate. Position 192 is a phosphoserine; by autocatalysis (Ser-192). Lys-209 participates in a covalent cross-link: Glycyl lysine isopeptide (Lys-Gly) (interchain with G-Cter in ubiquitin). Positions 301–338 (PCQYSDEGQSNSATSTGSFMDIASTNTSNKSDTNMEQV) are disordered. Over residues 306–338 (DEGQSNSATSTGSFMDIASTNTSNKSDTNMEQV) the composition is skewed to polar residues. Thr-341 is modified ((Microbial infection) O-acetylthreonine; by Yersinia YopJ; alternate). The disordered stretch occupies residues 354–391 (KNQAKQQSESGRLSLGASRGSSVESLPPTSEGKRMSAD). Residues 361 to 375 (SESGRLSLGASRGSS) show a composition bias toward low complexity. Phosphoserine occurs at positions 367, 389, and 439. The segment covering 443–452 (LTVTGTEPGQ) has biased composition (polar residues). The segment at 443–493 (LTVTGTEPGQVSSRSSSPSVRMITTSGPTSEKPTRSHPWTPDDSTDTNGSD) is disordered. A (Microbial infection) O-acetylthreonine; by Yersinia YopJ; alternate mark is found at Thr-444, Thr-446, and Thr-448. A compositionally biased stretch (low complexity) spans 453 to 463 (VSSRSSSPSVR). Position 455 is a phosphoserine (Ser-455). The segment covering 464 to 473 (MITTSGPTSE) has biased composition (polar residues). At Thr-467 the chain carries (Microbial infection) O-acetylthreonine; by Yersinia YopJ; alternate.

Belongs to the protein kinase superfamily. STE Ser/Thr protein kinase family. MAP kinase kinase kinase subfamily. In terms of assembly, can form homodimer. Binds both upstream activators and downstream substrates in multimolecular complexes. Interacts with TAB1/MAP3K7IP1, TAB2/MAP3K7IP2 and TAB3/MAP3K7IP3. Identified in the TRIKA2 complex composed of MAP3K7/TAK1, TAB1/MAP3K7IP1 and TAB2/MAP3K7IP2. Interacts with PPM1L and PPM1B/PP2CB. Interaction with PP2A and PPP6C leads to its repressed activity. Interacts with TRAF6 and TAB1/MAP3K7IP1; during IL-1 signaling. Interacts with TAOK1 and TAOK2; interaction with TAOK2 interferes with MAP3K7 interaction with IKKA, thus preventing NF-kappa-B activation. Interacts with DYNC2I2 (via WD domains). Interacts with CYLD and RBCK1. Interacts with TGFBR1; induces MAP3K7/TAK1 activation by TRAF6. Interacts with MAPK8IP1 and SMAD6. Interacts with isoform 1 of VRK2. Interacts with DAB2; the interaction is induced by TGF-beta stimulation and may mediate TGF-beta stimulated JNK activation. Interacts with TRIM5. Part of a complex containing ITCH, NDFIP1 and MAP3K7. Interacts with IFIT5; the interaction synergizes the recruitment of IKK to MAP3K7 and enhances IKK phosphorylation. Interacts with PLEKHM1 (via N- and C-terminus). Interacts with TRIM8. Found in a complex with SH3RF1, RAC2, MAP2K7/MKK7, MAPK8IP1/JIP1, MAPK8/JNK1 and MAPK9/JNK2. Interacts with SASH1. Interacts with RIPK1. (Microbial infection) Interacts with herpes simplex virus 2 protein US2; this interaction induces MAP3K7 phosphorylation and subsequent activation. Mg(2+) is required as a cofactor. In terms of processing, association with TAB1/MAP3K7IP1 promotes autophosphorylation at Ser-192 and subsequent activation. Association with TAB2/MAP3K7IP2, itself associated with free unanchored Lys-63 polyubiquitin chain, promotes autophosphorylation and subsequent activation of MAP3K7. Dephosphorylation at Ser-192 by PPM1B/PP2CB and at Thr-187 by PP2A and PPP6C leads to inactivation. Post-translationally, 'Lys-48'-linked polyubiquitination at Lys-72 is induced by TNFalpha, and leads to proteasomal degradation. Undergoes 'Lys-48'-linked polyubiquitination catalyzed by ITCH. Requires 'Lys-63'-linked polyubiquitination for autophosphorylation and subsequent activation. 'Lys-63'-linked ubiquitination does not lead to proteasomal degradation. Deubiquitinated by CYLD, a protease that selectively cleaves 'Lys-63'-linked ubiquitin chains. Deubiquitinated by Y.enterocolitica YopP. Deubiquitinated by USP19; leading to negative regulation of TNF-alpha- and IL-1beta-triggered NF-kappa-B activation. (Microbial infection) Cleaved and inactivated by the proteases 3C of coxsackievirus A16 and human enterovirus D68, allowing the virus to disrupt TRAF6-triggered NF-kappa-B induction. In terms of processing, (Microbial infection) Acetylation of Thr-184 and Thr-187 by Yersinia YopJ prevents phosphorylation and activation, thus blocking the MAPK signaling pathway. As to expression, isoform 1A is the most abundant in ovary, skeletal muscle, spleen and blood mononuclear cells. Isoform 1B is highly expressed in brain, kidney and small intestine. Isoform 1C is the major form in prostate. Isoform 1D is the less abundant form.

It localises to the cytoplasm. The protein resides in the cell membrane. It catalyses the reaction L-seryl-[protein] + ATP = O-phospho-L-seryl-[protein] + ADP + H(+). The enzyme catalyses L-threonyl-[protein] + ATP = O-phospho-L-threonyl-[protein] + ADP + H(+). Activated by pro-inflammatory cytokines and in response to physical and chemical stresses, including osmotic stress, oxidative stress, arsenic and ultraviolet light irradiation. Activated by 'Lys-63'-linked polyubiquitination and by autophosphorylation. Association with TAB1/MAP3K7IP1 and TAB2/MAP3K7IP2 promotes activation through autophosphorylation, whereas PPM1B/PP2CB, PP2A and PPP6C dephosphorylation leads to inactivation. Ceramides are also able to activate MAP3K7/TAK1. Functionally, serine/threonine kinase which acts as an essential component of the MAP kinase signal transduction pathway. Plays an important role in the cascades of cellular responses evoked by changes in the environment. Mediates signal transduction of TRAF6, various cytokines including interleukin-1 (IL-1), transforming growth factor-beta (TGFB), TGFB-related factors like BMP2 and BMP4, toll-like receptors (TLR), tumor necrosis factor receptor CD40 and B-cell receptor (BCR). Once activated, acts as an upstream activator of the MKK/JNK signal transduction cascade and the p38 MAPK signal transduction cascade through the phosphorylation and activation of several MAP kinase kinases like MAP2K1/MEK1, MAP2K3/MKK3, MAP2K6/MKK6 and MAP2K7/MKK7. These MAP2Ks in turn activate p38 MAPKs and c-jun N-terminal kinases (JNKs); both p38 MAPK and JNK pathways control the transcription factors activator protein-1 (AP-1). Independently of MAP2Ks and p38 MAPKs, acts as a key activator of NF-kappa-B by promoting activation of the I-kappa-B-kinase (IKK) core complex. Mechanistically, recruited to polyubiquitin chains of RIPK2 and IKBKG/NEMO via TAB2/MAP3K7IP2 and TAB3/MAP3K7IP3, and catalyzes phosphorylation and activation of IKBKB/IKKB component of the IKK complex, leading to NF-kappa-B activation. In osmotic stress signaling, plays a major role in the activation of MAPK8/JNK1, but not that of NF-kappa-B. Promotes TRIM5 capsid-specific restriction activity. Phosphorylates RIPK1 at 'Ser-321' which positively regulates RIPK1 interaction with RIPK3 to promote necroptosis but negatively regulates RIPK1 kinase activity and its interaction with FADD to mediate apoptosis. Phosphorylates STING1 in response to cGAMP-activation, promoting association between STEEP1 and STING1 and STING1 translocation to COPII vesicles. This chain is Mitogen-activated protein kinase kinase kinase 7, found in Homo sapiens (Human).